We begin with the raw amino-acid sequence, 125 residues long: DNA-directed RNA polymerase subunit omega (125 aa).

Belongs to the RNA polymerase subunit omega family. As to quaternary structure, the RNAP catalytic core consists of 2 alpha, 1 beta, 1 beta' and 1 omega subunit. When a sigma factor is associated with the core the holoenzyme is formed, which can initiate transcription.

It catalyses the reaction RNA(n) + a ribonucleoside 5'-triphosphate = RNA(n+1) + diphosphate. In terms of biological role, promotes RNA polymerase assembly. Latches the N- and C-terminal regions of the beta' subunit thereby facilitating its interaction with the beta and alpha subunits. This chain is DNA-directed RNA polymerase subunit omega, found in Zymomonas mobilis subsp. mobilis (strain ATCC 31821 / ZM4 / CP4).